A 191-amino-acid chain; its full sequence is Ribosomal RNA small subunit methyltransferase G (191 aa).

Residues glycine 62, phenylalanine 67, 111–112 (IE), and arginine 124 each bind S-adenosyl-L-methionine.

Belongs to the methyltransferase superfamily. RNA methyltransferase RsmG family.

It localises to the cytoplasm. It catalyses the reaction guanosine(527) in 16S rRNA + S-adenosyl-L-methionine = N(7)-methylguanosine(527) in 16S rRNA + S-adenosyl-L-homocysteine. Specifically methylates the N7 position of guanine in position 527 of 16S rRNA. This Rickettsia prowazekii (strain Madrid E) protein is Ribosomal RNA small subunit methyltransferase G.